Reading from the N-terminus, the 432-residue chain is C-type cytochrome OmcS (432 aa).

The N-terminal stretch at 1–25 (MKKGMKVSLSVAAAALLMSAPAAFA) is a signal peptide.

It depends on heme as a cofactor.

Its subcellular location is the cell outer membrane. It localises to the cell surface. Plays an important role in extracellular electron transfer. Can transfer electrons to insoluble Fe(3+) oxides as well as other extracellular electron acceptors, including Mn(4+) oxide and humic substances. Essential for direct interspecies electron transfer (DIET) in cocultures with G.metallireducens. In Geobacter sulfurreducens (strain ATCC 51573 / DSM 12127 / PCA), this protein is C-type cytochrome OmcS.